A 393-amino-acid polypeptide reads, in one-letter code: 8-amino-7-oxononanoate synthase (393 aa).

Arg-18 serves as a coordination point for substrate. A pyridoxal 5'-phosphate-binding site is contributed by 105 to 106; the sequence is GY. His-130 contributes to the substrate binding site. Pyridoxal 5'-phosphate-binding residues include Ser-178, His-206, and Thr-234. Lys-237 is modified (N6-(pyridoxal phosphate)lysine). Thr-353 contacts substrate.

This sequence belongs to the class-II pyridoxal-phosphate-dependent aminotransferase family. BioF subfamily. As to quaternary structure, homodimer. Pyridoxal 5'-phosphate serves as cofactor.

It carries out the reaction 6-carboxyhexanoyl-[ACP] + L-alanine + H(+) = (8S)-8-amino-7-oxononanoate + holo-[ACP] + CO2. Its pathway is cofactor biosynthesis; biotin biosynthesis. Functionally, catalyzes the decarboxylative condensation of pimeloyl-[acyl-carrier protein] and L-alanine to produce 8-amino-7-oxononanoate (AON), [acyl-carrier protein], and carbon dioxide. The polypeptide is 8-amino-7-oxononanoate synthase (Geotalea daltonii (strain DSM 22248 / JCM 15807 / FRC-32) (Geobacter daltonii)).